The primary structure comprises 389 residues: S-adenosylmethionine synthase (389 aa).

Histidine 15 is an ATP binding site. A Mg(2+)-binding site is contributed by aspartate 17. Residue glutamate 43 coordinates K(+). L-methionine-binding residues include glutamate 56 and glutamine 99. Residues glutamine 99–glutamate 109 form a flexible loop region. ATP-binding positions include aspartate 166 to lysine 168, arginine 234 to phenylalanine 235, aspartate 243, arginine 249 to lysine 250, alanine 266, and lysine 270. Aspartate 243 provides a ligand contact to L-methionine. Lysine 274 provides a ligand contact to L-methionine.

The protein belongs to the AdoMet synthase family. In terms of assembly, homotetramer; dimer of dimers. It depends on Mg(2+) as a cofactor. The cofactor is K(+).

The protein resides in the cytoplasm. It catalyses the reaction L-methionine + ATP + H2O = S-adenosyl-L-methionine + phosphate + diphosphate. It functions in the pathway amino-acid biosynthesis; S-adenosyl-L-methionine biosynthesis; S-adenosyl-L-methionine from L-methionine: step 1/1. Functionally, catalyzes the formation of S-adenosylmethionine (AdoMet) from methionine and ATP. The overall synthetic reaction is composed of two sequential steps, AdoMet formation and the subsequent tripolyphosphate hydrolysis which occurs prior to release of AdoMet from the enzyme. This chain is S-adenosylmethionine synthase, found in Neisseria gonorrhoeae (strain ATCC 700825 / FA 1090).